Here is a 1088-residue protein sequence, read N- to C-terminus: Methionine S-methyltransferase (1088 aa).

It belongs to the class I-like SAM-binding methyltransferase superfamily. Homotetramer.

The protein resides in the cytoplasm. The enzyme catalyses L-methionine + S-adenosyl-L-methionine = S-methyl-L-methionine + S-adenosyl-L-homocysteine. Functionally, catalyzes the S-methylmethionine (SMM) biosynthesis from adenosyl-L-homocysteine (AdoMet) and methionine. SMM biosynthesis (by MMT1) and degradation (by HMT-1, HMT-2 and HMT-3) constitute the SMM cycle in plants, which is probably required to achieve short term control of AdoMet level. Also able to catalyze the selenium-methylmethionine (SeMM) from AdoMet and selenium-methionine (SeMet). May play a role in phoem sulfur transport; such function is however not essential. This chain is Methionine S-methyltransferase (MMT1), found in Wollastonia biflora (Beach sunflower).